A 274-amino-acid chain; its full sequence is GPN-loop GTPase 3 (274 aa).

13–18 (GVGKST) lines the GTP pocket. A Gly-Pro-Asn (GPN)-loop; involved in dimer interface motif is present at residues 70–72 (GPN). 173 to 176 (SKID) provides a ligand contact to GTP. The segment at 255-274 (SESQEPKEPVEEIEEEVDFE) is disordered. Residues 265–274 (EEIEEEVDFE) are compositionally biased toward acidic residues.

The protein belongs to the GPN-loop GTPase family. Heterodimers with GPN1 or GPN2. Binds to RNA polymerase II (RNAPII).

In terms of biological role, small GTPase required for proper nuclear import of RNA polymerase II and III (RNAPII and RNAPIII). May act at an RNAP assembly step prior to nuclear import. This Debaryomyces hansenii (strain ATCC 36239 / CBS 767 / BCRC 21394 / JCM 1990 / NBRC 0083 / IGC 2968) (Yeast) protein is GPN-loop GTPase 3.